A 243-amino-acid chain; its full sequence is Pyridoxine 5'-phosphate synthase (243 aa).

Asparagine 9 provides a ligand contact to 3-amino-2-oxopropyl phosphate. Aspartate 11–histidine 12 provides a ligand contact to 1-deoxy-D-xylulose 5-phosphate. Arginine 20 contacts 3-amino-2-oxopropyl phosphate. The Proton acceptor role is filled by histidine 45. 1-deoxy-D-xylulose 5-phosphate contacts are provided by arginine 47 and histidine 52. Glutamate 72 (proton acceptor) is an active-site residue. 1-deoxy-D-xylulose 5-phosphate is bound at residue threonine 102. Histidine 193 acts as the Proton donor in catalysis. 3-amino-2-oxopropyl phosphate contacts are provided by residues glycine 194 and glycine 215–histidine 216.

It belongs to the PNP synthase family. As to quaternary structure, homooctamer; tetramer of dimers.

The protein localises to the cytoplasm. The enzyme catalyses 3-amino-2-oxopropyl phosphate + 1-deoxy-D-xylulose 5-phosphate = pyridoxine 5'-phosphate + phosphate + 2 H2O + H(+). It functions in the pathway cofactor biosynthesis; pyridoxine 5'-phosphate biosynthesis; pyridoxine 5'-phosphate from D-erythrose 4-phosphate: step 5/5. In terms of biological role, catalyzes the complicated ring closure reaction between the two acyclic compounds 1-deoxy-D-xylulose-5-phosphate (DXP) and 3-amino-2-oxopropyl phosphate (1-amino-acetone-3-phosphate or AAP) to form pyridoxine 5'-phosphate (PNP) and inorganic phosphate. The polypeptide is Pyridoxine 5'-phosphate synthase (Salmonella paratyphi A (strain ATCC 9150 / SARB42)).